The primary structure comprises 150 residues: 6,7-dimethyl-8-ribityllumazine synthase (150 aa).

5-amino-6-(D-ribitylamino)uracil contacts are provided by residues Phe11, 43–45 (VYD), and 67–69 (AVI). Residue 72–73 (AT) coordinates (2S)-2-hydroxy-3-oxobutyl phosphate. The active-site Proton donor is His75. Leu100 is a 5-amino-6-(D-ribitylamino)uracil binding site. (2S)-2-hydroxy-3-oxobutyl phosphate is bound at residue Arg115.

This sequence belongs to the DMRL synthase family.

The catalysed reaction is (2S)-2-hydroxy-3-oxobutyl phosphate + 5-amino-6-(D-ribitylamino)uracil = 6,7-dimethyl-8-(1-D-ribityl)lumazine + phosphate + 2 H2O + H(+). It participates in cofactor biosynthesis; riboflavin biosynthesis; riboflavin from 2-hydroxy-3-oxobutyl phosphate and 5-amino-6-(D-ribitylamino)uracil: step 1/2. Functionally, catalyzes the formation of 6,7-dimethyl-8-ribityllumazine by condensation of 5-amino-6-(D-ribitylamino)uracil with 3,4-dihydroxy-2-butanone 4-phosphate. This is the penultimate step in the biosynthesis of riboflavin. In Pyrobaculum aerophilum (strain ATCC 51768 / DSM 7523 / JCM 9630 / CIP 104966 / NBRC 100827 / IM2), this protein is 6,7-dimethyl-8-ribityllumazine synthase.